The following is a 220-amino-acid chain: Transcriptional regulatory protein SpaR (220 aa).

The Response regulatory domain occupies 3 to 115; sequence KILAVDDEKD…ELSARVNAHL (113 aa). The residue at position 51 (Asp51) is a 4-aspartylphosphate. The ompR/PhoB-type DNA-binding region spans 124-220; sequence QSKRVISGFL…TVWGVGYKWE (97 aa).

Phosphorylated by SpaK.

The protein localises to the cytoplasm. Its function is as follows. Member of the two-component regulatory system SpaK/SpaR involved in the regulation of the biosynthesis of lantibiotic subtilin. SpaR may function as a regulatory protein. The polypeptide is Transcriptional regulatory protein SpaR (spaR) (Bacillus subtilis).